A 312-amino-acid polypeptide reads, in one-letter code: tRNA uridine(34) hydroxylase (312 aa).

The 96-residue stretch at 130–225 (RGDEVVFFDG…YGEQFGNKGL (96 aa)) folds into the Rhodanese domain. C185 serves as the catalytic Cysteine persulfide intermediate.

This sequence belongs to the TrhO family.

It carries out the reaction uridine(34) in tRNA + AH2 + O2 = 5-hydroxyuridine(34) in tRNA + A + H2O. Its function is as follows. Catalyzes oxygen-dependent 5-hydroxyuridine (ho5U) modification at position 34 in tRNAs. The polypeptide is tRNA uridine(34) hydroxylase (Corynebacterium glutamicum (strain R)).